An 807-amino-acid chain; its full sequence is Centrosomal protein of 97 kDa (807 aa).

LRR repeat units lie at residues 34-55, 56-77, 78-99, 100-121, 122-143, 144-165, and 168-189; these read DTQT…EKCR, NLVQ…AKLI, HLRV…KDLV, HLEW…NSST, SLQH…SKLK, SLKT…SACL, and SLTI…AFLA. The LRRCT domain occupies 208–246; the sequence is TPSIPGFDYRPFIVSWCLNLKVLDGYVVSQKESLKAEWL. A disordered region spans residues 306–330; that stretch reads RSDGYLTSSTPNKRLPLSTEHHSPT. Residues 519–548 form the IQ domain; the sequence is ISKAATKLQSCWRGFYARKYNPKVKDVCYE. The segment covering 607-623 has biased composition (polar residues); that stretch reads TANSSENDLPSASNSKH. The tract at residues 607 to 756 is disordered; that stretch reads TANSSENDLP…RPEITTCSDN (150 aa). Residues 681 to 690 show a composition bias toward basic and acidic residues; it reads TGRHYNDKVP. A compositionally biased stretch (polar residues) spans 704–724; sequence SQSSKDSFTSEQDSSLLQQYL.

The protein localises to the cytoplasm. Its subcellular location is the cytoskeleton. The protein resides in the microtubule organizing center. It is found in the centrosome. In terms of biological role, acts as a key negative regulator of ciliogenesis in collaboration with ccp110 by capping the mother centriole thereby preventing cilia formation. Required for recruitment of ccp110 to the centrosome. The protein is Centrosomal protein of 97 kDa (cep97) of Xenopus laevis (African clawed frog).